We begin with the raw amino-acid sequence, 480 residues long: Vacuolar protein sorting-associated protein 9A (480 aa).

A VPS9 domain is found at 111-255 (VKSDEELFEK…IWNIDGESLS (145 aa)). Residues Asn-189 and Asp-194 each coordinate GTP. Positions 276–288 (SASSENQDNQNNL) are enriched in polar residues. Disordered stretches follow at residues 276–338 (SASS…VQSI) and 418–480 (ESEE…PEHA). Positions 289-305 (DVREQKSQTLKASRDSD) are enriched in basic and acidic residues. 3 stretches are compositionally biased toward polar residues: residues 327–338 (ASSNPVERVQSI), 427–437 (NAVNFSEGSSK), and 451–461 (VDNTGTQQTAV).

As to quaternary structure, interacts with RAB5A. Interacts with GPA3 (via C-terminus).

Its subcellular location is the cytoplasm. It localises to the golgi apparatus. The protein localises to the trans-Golgi network. The protein resides in the prevacuolar compartment. In terms of biological role, functions as a guanine nucleotide exchange factor (GEF) for Rab small GTPases. Activates specifically RAB5A protein. Functions cooperatively with RAB5A to regulate post-Golgi dense vesicle-mediated transport of storage proteins to the type II protein bodies (PBII) protein storage vacuoles in developing endosperm. The sequence is that of Vacuolar protein sorting-associated protein 9A from Oryza sativa subsp. japonica (Rice).